Here is a 205-residue protein sequence, read N- to C-terminus: Large ribosomal subunit protein uL3 (205 aa).

It belongs to the universal ribosomal protein uL3 family. Part of the 50S ribosomal subunit. Forms a cluster with proteins L14 and L19.

One of the primary rRNA binding proteins, it binds directly near the 3'-end of the 23S rRNA, where it nucleates assembly of the 50S subunit. The sequence is that of Large ribosomal subunit protein uL3 from Bacteroides thetaiotaomicron (strain ATCC 29148 / DSM 2079 / JCM 5827 / CCUG 10774 / NCTC 10582 / VPI-5482 / E50).